Here is a 417-residue protein sequence, read N- to C-terminus: Phosphoglycerate kinase 2 (417 aa).

S4 is subject to Phosphoserine. K11 carries the N6-acetyllysine modification. V23, D24, F25, N26, Q38, and R39 together coordinate (2R)-3-phosphoglycerate. K48 carries the post-translational modification N6-acetyllysine. 4 residues coordinate (2R)-3-phosphoglycerate: S62, H63, G65, and R66. 3 positions are modified to N6-acetyllysine: K75, K86, and K97. (2R)-3-phosphoglycerate is bound by residues L122 and R123. K131 and K146 each carry N6-acetyllysine. (2R)-3-phosphoglycerate contacts are provided by H170 and R171. Position 196 is a phosphotyrosine (Y196). Position 199 is an N6-acetyllysine (K199). G214 is a binding site for ADP. Residue G214 participates in CDP binding. A215 and K216 together coordinate AMP. A215 provides a ligand contact to ATP. Residue A215 participates in Mg(2+) binding. D219 provides a ligand contact to CDP. D219 contacts Mg(2+). K220 is an AMP binding site. Position 220 (K220) interacts with ATP. Position 238 (G238) interacts with ADP. G238 is a binding site for CDP. Residue G239 participates in AMP binding. An ATP-binding site is contributed by G239. An N6-acetyllysine mark is found at K267 and K291. G313 serves as a coordination point for AMP. G313 serves as a coordination point for ATP. CDP is bound by residues G338, I340, and F343. Residue F343 coordinates ADP. E344 provides a ligand contact to AMP. E344, D375, and T376 together coordinate ATP. D375 provides a ligand contact to Mg(2+).

The protein belongs to the phosphoglycerate kinase family. As to quaternary structure, monomer. Requires Mg(2+) as cofactor. Testis and sperm. Localized on the principle piece in the sperm (at protein level). Testis-specific.

The protein localises to the cytoplasm. It carries out the reaction (2R)-3-phosphoglycerate + ATP = (2R)-3-phospho-glyceroyl phosphate + ADP. It functions in the pathway carbohydrate degradation; glycolysis; pyruvate from D-glyceraldehyde 3-phosphate: step 2/5. Functionally, essential for sperm motility and male fertility but is not required for the completion of spermatogenesis. In Mus musculus (Mouse), this protein is Phosphoglycerate kinase 2 (Pgk2).